We begin with the raw amino-acid sequence, 259 residues long: Type III pantothenate kinase (259 aa).

Residue 6–13 (DVGNTNCT) coordinates ATP. 107-110 (GSDR) contacts substrate. The Proton acceptor role is filled by aspartate 109. Aspartate 129 serves as a coordination point for K(+). ATP is bound at residue threonine 132. Threonine 184 is a substrate binding site.

Belongs to the type III pantothenate kinase family. In terms of assembly, homodimer. It depends on NH4(+) as a cofactor. The cofactor is K(+).

Its subcellular location is the cytoplasm. It carries out the reaction (R)-pantothenate + ATP = (R)-4'-phosphopantothenate + ADP + H(+). Its pathway is cofactor biosynthesis; coenzyme A biosynthesis; CoA from (R)-pantothenate: step 1/5. Its function is as follows. Catalyzes the phosphorylation of pantothenate (Pan), the first step in CoA biosynthesis. This chain is Type III pantothenate kinase, found in Listeria welshimeri serovar 6b (strain ATCC 35897 / DSM 20650 / CCUG 15529 / CIP 8149 / NCTC 11857 / SLCC 5334 / V8).